The chain runs to 130 residues: Small ribosomal subunit protein uS8 (130 aa).

Belongs to the universal ribosomal protein uS8 family. In terms of assembly, part of the 30S ribosomal subunit. Contacts proteins S5 and S12.

Functionally, one of the primary rRNA binding proteins, it binds directly to 16S rRNA central domain where it helps coordinate assembly of the platform of the 30S subunit. In Teredinibacter turnerae (strain ATCC 39867 / T7901), this protein is Small ribosomal subunit protein uS8.